Consider the following 200-residue polypeptide: Peptidyl-tRNA hydrolase (200 aa).

Residue tyrosine 17 coordinates tRNA. The Proton acceptor role is filled by histidine 22. Residues tyrosine 78, asparagine 80, and asparagine 126 each coordinate tRNA.

It belongs to the PTH family. As to quaternary structure, monomer.

The protein localises to the cytoplasm. It carries out the reaction an N-acyl-L-alpha-aminoacyl-tRNA + H2O = an N-acyl-L-amino acid + a tRNA + H(+). In terms of biological role, hydrolyzes ribosome-free peptidyl-tRNAs (with 1 or more amino acids incorporated), which drop off the ribosome during protein synthesis, or as a result of ribosome stalling. Its function is as follows. Catalyzes the release of premature peptidyl moieties from peptidyl-tRNA molecules trapped in stalled 50S ribosomal subunits, and thus maintains levels of free tRNAs and 50S ribosomes. The polypeptide is Peptidyl-tRNA hydrolase (Cutibacterium acnes (strain DSM 16379 / KPA171202) (Propionibacterium acnes)).